Reading from the N-terminus, the 457-residue chain is tRNA modification GTPase MnmE (457 aa).

Positions 25, 87, and 126 each coordinate (6S)-5-formyl-5,6,7,8-tetrahydrofolate. One can recognise a TrmE-type G domain in the interval glycine 223–phenylalanine 377. Residue asparagine 233 participates in K(+) binding. Residues asparagine 233–serine 238, threonine 252–threonine 258, and aspartate 277–glycine 280 contribute to the GTP site. Serine 237 contacts Mg(2+). Positions 252, 254, and 257 each coordinate K(+). Threonine 258 contributes to the Mg(2+) binding site. Position 457 (lysine 457) interacts with (6S)-5-formyl-5,6,7,8-tetrahydrofolate.

It belongs to the TRAFAC class TrmE-Era-EngA-EngB-Septin-like GTPase superfamily. TrmE GTPase family. Homodimer. Heterotetramer of two MnmE and two MnmG subunits. K(+) serves as cofactor.

The protein resides in the cytoplasm. Functionally, exhibits a very high intrinsic GTPase hydrolysis rate. Involved in the addition of a carboxymethylaminomethyl (cmnm) group at the wobble position (U34) of certain tRNAs, forming tRNA-cmnm(5)s(2)U34. The chain is tRNA modification GTPase MnmE from Streptococcus gordonii (strain Challis / ATCC 35105 / BCRC 15272 / CH1 / DL1 / V288).